The following is a 66-amino-acid chain: Large ribosomal subunit protein bL35 (66 aa).

Belongs to the bacterial ribosomal protein bL35 family.

This chain is Large ribosomal subunit protein bL35, found in Rhodopseudomonas palustris (strain BisB18).